We begin with the raw amino-acid sequence, 570 residues long: Polypeptide N-acetylgalactosaminyltransferase 2 (570 aa).

Topologically, residues 1–6 (MRRRSR) are cytoplasmic. The helical; Signal-anchor for type II membrane protein transmembrane segment at 7 to 24 (MLLCFALLWVLGIAYYMY) threads the bilayer. Residues 25 to 570 (SGGGSALAAG…QWKFSLNLQQ (546 aa)) are Lumenal-facing. O-linked (Xyl...) (chondroitin sulfate) serine glycosylation occurs at Ser29. Disulfide bonds link Cys125–Cys353, Cys344–Cys422, Cys455–Cys472, and Cys495–Cys512. The interval 134 to 239 (LPATSVVITF…ERWLEPLLER (106 aa)) is catalytic subdomain A. 3 residues coordinate substrate: Thr142, Asp175, and Arg200. Asp223 is a binding site for Mn(2+). Ser224 is a binding site for substrate. His225 contributes to the Mn(2+) binding site. A catalytic subdomain B region spans residues 299–361 (PIKTPMIAGG…PCSRVGHVFR (63 aa)). Trp330 contributes to the substrate binding site. His358 contacts Mn(2+). Residues Arg361, His364, and Tyr366 each coordinate substrate. The Ricin B-type lectin domain occupies 442–565 (QDIAFGALQQ…PALSQQWKFS (124 aa)). N-linked (GlcNAc...) asparagine glycosylation occurs at Asn515. Ser535 is modified (phosphoserine). A disulfide bond links Cys538 and Cys554.

It belongs to the glycosyltransferase 2 family. GalNAc-T subfamily. It depends on Mn(2+) as a cofactor. In terms of tissue distribution, widely expressed at high level.

It localises to the golgi apparatus. Its subcellular location is the golgi stack membrane. The protein localises to the secreted. It carries out the reaction L-seryl-[protein] + UDP-N-acetyl-alpha-D-galactosamine = a 3-O-[N-acetyl-alpha-D-galactosaminyl]-L-seryl-[protein] + UDP + H(+). The catalysed reaction is L-threonyl-[protein] + UDP-N-acetyl-alpha-D-galactosamine = a 3-O-[N-acetyl-alpha-D-galactosaminyl]-L-threonyl-[protein] + UDP + H(+). The protein operates within protein modification; protein glycosylation. Functionally, catalyzes the initial reaction in O-linked oligosaccharide biosynthesis, the transfer of an N-acetyl-D-galactosamine residue to a serine or threonine residue on the protein receptor. Has a broad spectrum of substrates for peptides such as EA2, Muc5AC, Muc1a, Muc1b. Probably involved in O-linked glycosylation of the immunoglobulin A1 (IgA1) hinge region. Involved in O-linked glycosylation of APOC-III, ANGPTL3 and PLTP. It participates in the regulation of HDL-C metabolism. This Mus musculus (Mouse) protein is Polypeptide N-acetylgalactosaminyltransferase 2 (Galnt2).